Consider the following 391-residue polypeptide: S-adenosylmethionine synthase 1 (391 aa).

Residue Glu-9 coordinates Mg(2+). His-15 provides a ligand contact to ATP. A K(+)-binding site is contributed by Glu-43. L-methionine-binding residues include Glu-56 and Gln-99. ATP is bound by residues 167-169 (DGK), 235-238 (SGRF), Asp-246, 252-253 (RK), Ala-269, Lys-273, and Lys-277. Asp-246 serves as a coordination point for L-methionine. Residue Lys-277 participates in L-methionine binding.

It belongs to the AdoMet synthase family. As to quaternary structure, homotetramer. Mn(2+) is required as a cofactor. It depends on Mg(2+) as a cofactor. Requires Co(2+) as cofactor. The cofactor is K(+).

It is found in the cytoplasm. It catalyses the reaction L-methionine + ATP + H2O = S-adenosyl-L-methionine + phosphate + diphosphate. It participates in amino-acid biosynthesis; S-adenosyl-L-methionine biosynthesis; S-adenosyl-L-methionine from L-methionine: step 1/1. Functionally, catalyzes the formation of S-adenosylmethionine from methionine and ATP. The reaction comprises two steps that are both catalyzed by the same enzyme: formation of S-adenosylmethionine (AdoMet) and triphosphate, and subsequent hydrolysis of the triphosphate. The sequence is that of S-adenosylmethionine synthase 1 (METK1) from Vitis vinifera (Grape).